The sequence spans 119 residues: Beta-2-microglobulin (119 aa).

An N-terminal signal peptide occupies residues 1–20; it reads MARSVTVIFLVLVSLAVVLA. Positions 25-114 constitute an Ig-like C1-type domain; the sequence is PQIQVYSRHP…VTLKEPKTVT (90 aa). An intrachain disulfide couples Cys-45 to Cys-100.

This sequence belongs to the beta-2-microglobulin family. As to quaternary structure, heterodimer of an alpha chain and a beta chain. Beta-2-microglobulin is the beta-chain of major histocompatibility complex class I molecules. Forms a heterotrimer with MR1 and a metabolite antigen.

It is found in the secreted. Its function is as follows. Component of the class I major histocompatibility complex (MHC). Involved in the presentation of peptide antigens to the immune system. This is Beta-2-microglobulin (B2m) from Rattus norvegicus (Rat).